Consider the following 365-residue polypeptide: Probable L-tyrosine/L-aspartate decarboxylase (365 aa).

Lys225 is modified (N6-(pyridoxal phosphate)lysine).

This sequence belongs to the group II decarboxylase family. MfnA subfamily. Requires pyridoxal 5'-phosphate as cofactor.

It carries out the reaction L-tyrosine + H(+) = tyramine + CO2. The catalysed reaction is L-aspartate + H(+) = beta-alanine + CO2. Its pathway is cofactor biosynthesis; methanofuran biosynthesis. It participates in cofactor biosynthesis; coenzyme A biosynthesis. In terms of biological role, catalyzes the decarboxylation of L-tyrosine to produce tyramine for methanofuran biosynthesis. Can also catalyze the decarboxylation of L-aspartate to produce beta-alanine for coenzyme A (CoA) biosynthesis. The polypeptide is Probable L-tyrosine/L-aspartate decarboxylase (Methanocorpusculum labreanum (strain ATCC 43576 / DSM 4855 / Z)).